A 261-amino-acid polypeptide reads, in one-letter code: MLICNDKSNPKTLLEEIMALRPWRKGPFEISQIKIDSEWDSSIKWDLVKNATPLKDKVVADVGCNNGYYLFKMLEHGPKSLVGFDPGVLVKKQFEFLAPFFDKEKKIIYESLGVEDLHEKYPNAFDVIFCLGVLYHRKSPLEALKALYHALKIKGELVLDTLIIDSPLDIALCPKKTYAKMKNVYFIPSVSALKGWCERVGFENFEILSVLKTTPKEQRKTDFILGQSLEDFLDKTDPSKTLEGYDAPLRGYFKMLKPSKR.

Residues Lys25, Trp39, Lys44, Gly63, 114-115, Tyr135, and Arg250 contribute to the carboxy-S-adenosyl-L-methionine site; that span reads VE.

It belongs to the class I-like SAM-binding methyltransferase superfamily. CmoB family. Homotetramer.

It catalyses the reaction carboxy-S-adenosyl-L-methionine + 5-hydroxyuridine(34) in tRNA = 5-carboxymethoxyuridine(34) in tRNA + S-adenosyl-L-homocysteine + H(+). Its function is as follows. Catalyzes carboxymethyl transfer from carboxy-S-adenosyl-L-methionine (Cx-SAM) to 5-hydroxyuridine (ho5U) to form 5-carboxymethoxyuridine (cmo5U) at position 34 in tRNAs. In Helicobacter pylori (strain ATCC 700392 / 26695) (Campylobacter pylori), this protein is tRNA U34 carboxymethyltransferase.